The sequence spans 938 residues: Ankyrin repeat and LEM domain-containing protein 2 (938 aa).

Residues 1–12 lie on the Lumenal side of the membrane; the sequence is MLWPRLAAAEWA. Residues 13-32 traverse the membrane as a helical; Signal-anchor for type III membrane protein segment; that stretch reads ALAWELLGASVLLIAVRWLV. The Cytoplasmic portion of the chain corresponds to 33–938; it reads RRLGPRPGGL…MARLAELAAL (906 aa). Positions 69-113 constitute an LEM domain; that stretch reads LARLKLLNPDDLREEIVKAGLKCGPITSTTRFIFEKKLAQALLEQ. 2 positions are modified to phosphoserine: serine 259 and serine 268. Residues 411–440 form an ANK repeat; the sequence is GYDTPLHFACKFGNADVVNVLSSHHLIVKN. A phosphoserine mark is found at serine 488, serine 496, serine 512, and serine 528. Over residues 609 to 627 the composition is skewed to basic and acidic residues; it reads GKKAQQETGEREASCRDKA. A disordered region spans residues 609–636; sequence GKKAQQETGEREASCRDKATTSGSNSIS. 4 positions are modified to phosphoserine: serine 662, serine 804, serine 896, and serine 914. The tract at residues 870–924 is disordered; the sequence is RQSWPSPAVKGRFKSQLPDLSGPHSYSPGRNSVAGSNPAKPGLGSPGRYSPVHGS.

This sequence belongs to the ANKLE2 family. In terms of assembly, interacts with BAF/BANF1. Interacts with protein phosphatase 2A (PP2A) components PPP2C (PPP2CA or PPP2CB) and PPP2R1A. (Microbial infection) May interact with non-structural protein 4A/NS4A from Zika virus strains Mr-766 or French Polynesia 10087PF/2013; the interaction may inhibit ANKLE2 function and contribute to defects in brain development, such as microcephaly.

The protein resides in the endoplasmic reticulum membrane. Its function is as follows. Involved in mitotic nuclear envelope reassembly by promoting dephosphorylation of BAF/BANF1 during mitotic exit. Coordinates the control of BAF/BANF1 dephosphorylation by inhibiting VRK1 kinase and promoting dephosphorylation of BAF/BANF1 by protein phosphatase 2A (PP2A), thereby facilitating nuclear envelope assembly. May regulate nuclear localization of VRK1 in non-dividing cells. It is unclear whether it acts as a real PP2A regulatory subunit or whether it is involved in recruitment of the PP2A complex. Involved in brain development. The sequence is that of Ankyrin repeat and LEM domain-containing protein 2 (ANKLE2) from Homo sapiens (Human).